A 374-amino-acid polypeptide reads, in one-letter code: tRNA-specific 2-thiouridylase MnmA (374 aa).

Residues glycine 12–serine 19 and methionine 38 contribute to the ATP site. Residues asparagine 98–aspartate 100 form an interaction with target base in tRNA region. Cysteine 103 serves as the catalytic Nucleophile. Residues cysteine 103 and cysteine 202 are joined by a disulfide bond. Glycine 128 contributes to the ATP binding site. Residues lysine 152–glutamine 154 form an interaction with tRNA region. Cysteine 202 acts as the Cysteine persulfide intermediate in catalysis. Positions arginine 316 to tyrosine 317 are interaction with tRNA.

Belongs to the MnmA/TRMU family.

The protein resides in the cytoplasm. The enzyme catalyses S-sulfanyl-L-cysteinyl-[protein] + uridine(34) in tRNA + AH2 + ATP = 2-thiouridine(34) in tRNA + L-cysteinyl-[protein] + A + AMP + diphosphate + H(+). Functionally, catalyzes the 2-thiolation of uridine at the wobble position (U34) of tRNA, leading to the formation of s(2)U34. This Vibrio vulnificus (strain YJ016) protein is tRNA-specific 2-thiouridylase MnmA.